The following is a 499-amino-acid chain: Glycerol kinase (499 aa).

ADP is bound at residue Thr13. ATP contacts are provided by Thr13, Thr14, and Ser15. Thr13 serves as a coordination point for sn-glycerol 3-phosphate. Residue Arg17 coordinates ADP. Positions 83, 84, 135, and 244 each coordinate sn-glycerol 3-phosphate. 5 residues coordinate glycerol: Arg83, Glu84, Tyr135, Asp244, and Gln245. Residues Thr266 and Gly310 each contribute to the ADP site. Positions 266, 310, 314, and 411 each coordinate ATP. The ADP site is built by Gly411 and Asn415.

This sequence belongs to the FGGY kinase family.

The enzyme catalyses glycerol + ATP = sn-glycerol 3-phosphate + ADP + H(+). It functions in the pathway polyol metabolism; glycerol degradation via glycerol kinase pathway; sn-glycerol 3-phosphate from glycerol: step 1/1. Inhibited by fructose 1,6-bisphosphate (FBP). Its function is as follows. Key enzyme in the regulation of glycerol uptake and metabolism. Catalyzes the phosphorylation of glycerol to yield sn-glycerol 3-phosphate. This Pseudothermotoga lettingae (strain ATCC BAA-301 / DSM 14385 / NBRC 107922 / TMO) (Thermotoga lettingae) protein is Glycerol kinase.